The following is a 424-amino-acid chain: Adenylosuccinate synthetase (424 aa).

Residues 12–18 (GDEGKGK) and 40–42 (GHT) contribute to the GTP site. The active-site Proton acceptor is the D13. Mg(2+) is bound by residues D13 and G40. Residues 13-16 (DEGK), 38-41 (NAGH), T130, R144, N220, T235, and R299 each bind IMP. H41 functions as the Proton donor in the catalytic mechanism. 295–301 (VTTGRRR) provides a ligand contact to substrate. Residues R301, 327 to 329 (KLD), and 412 to 414 (GTG) each bind GTP.

The protein belongs to the adenylosuccinate synthetase family. Homodimer. Requires Mg(2+) as cofactor.

It is found in the cytoplasm. It carries out the reaction IMP + L-aspartate + GTP = N(6)-(1,2-dicarboxyethyl)-AMP + GDP + phosphate + 2 H(+). Its pathway is purine metabolism; AMP biosynthesis via de novo pathway; AMP from IMP: step 1/2. Functionally, plays an important role in the de novo pathway and in the salvage pathway of purine nucleotide biosynthesis. Catalyzes the first committed step in the biosynthesis of AMP from IMP. This Aspergillus clavatus (strain ATCC 1007 / CBS 513.65 / DSM 816 / NCTC 3887 / NRRL 1 / QM 1276 / 107) protein is Adenylosuccinate synthetase.